Consider the following 318-residue polypeptide: 1-aminocyclopropane-1-carboxylate oxidase (318 aa).

One can recognise a Fe2OG dioxygenase domain in the interval 153–253 (PNFGTKVANY…RMSIASFYNP (101 aa)). The Fe cation site is built by histidine 177, aspartate 179, and histidine 234.

The protein belongs to the iron/ascorbate-dependent oxidoreductase family. It depends on Fe cation as a cofactor.

It carries out the reaction 1-aminocyclopropane-1-carboxylate + L-ascorbate + O2 = ethene + L-dehydroascorbate + hydrogen cyanide + CO2 + 2 H2O. It participates in alkene biosynthesis; ethylene biosynthesis via S-adenosyl-L-methionine; ethylene from S-adenosyl-L-methionine: step 2/2. The sequence is that of 1-aminocyclopropane-1-carboxylate oxidase (DK-ACO1) from Diospyros kaki (Kaki persimmon).